The chain runs to 111 residues: Cytochrome c oxidase subunit 6A1, mitochondrial (111 aa).

The N-terminal 26 residues, 1-26 (MASAVLSASRVSGLLGRALPRVGRPM), are a transit peptide targeting the mitochondrion. Topologically, residues 27–36 (SSGAHGEEGS) are mitochondrial matrix. A helical transmembrane segment spans residues 37 to 61 (ARIWKALTYFVALPGVGVSMLNVFL). Residues 62 to 111 (KSRHEEHERPEFVAYPHLRIRTKPFPWGDGNHTLFHNPHMNPLPTGYEDE) lie on the Mitochondrial intermembrane side of the membrane.

The protein belongs to the cytochrome c oxidase subunit 6A family. Component of the cytochrome c oxidase (complex IV, CIV), a multisubunit enzyme composed of 14 subunits. The complex is composed of a catalytic core of 3 subunits MT-CO1, MT-CO2 and MT-CO3, encoded in the mitochondrial DNA, and 11 supernumerary subunits COX4I, COX5A, COX5B, COX6A, COX6B, COX6C, COX7A, COX7B, COX7C, COX8 and NDUFA4, which are encoded in the nuclear genome. The complex exists as a monomer or a dimer and forms supercomplexes (SCs) in the inner mitochondrial membrane with NADH-ubiquinone oxidoreductase (complex I, CI) and ubiquinol-cytochrome c oxidoreductase (cytochrome b-c1 complex, complex III, CIII), resulting in different assemblies (supercomplex SCI(1)III(2)IV(1) and megacomplex MCI(2)III(2)IV(2)).

The protein localises to the mitochondrion inner membrane. It functions in the pathway energy metabolism; oxidative phosphorylation. Functionally, component of the cytochrome c oxidase, the last enzyme in the mitochondrial electron transport chain which drives oxidative phosphorylation. The respiratory chain contains 3 multisubunit complexes succinate dehydrogenase (complex II, CII), ubiquinol-cytochrome c oxidoreductase (cytochrome b-c1 complex, complex III, CIII) and cytochrome c oxidase (complex IV, CIV), that cooperate to transfer electrons derived from NADH and succinate to molecular oxygen, creating an electrochemical gradient over the inner membrane that drives transmembrane transport and the ATP synthase. Cytochrome c oxidase is the component of the respiratory chain that catalyzes the reduction of oxygen to water. Electrons originating from reduced cytochrome c in the intermembrane space (IMS) are transferred via the dinuclear copper A center (CU(A)) of subunit 2 and heme A of subunit 1 to the active site in subunit 1, a binuclear center (BNC) formed by heme A3 and copper B (CU(B)). The BNC reduces molecular oxygen to 2 water molecules unsing 4 electrons from cytochrome c in the IMS and 4 protons from the mitochondrial matrix. The polypeptide is Cytochrome c oxidase subunit 6A1, mitochondrial (Cox6a1) (Rattus norvegicus (Rat)).